The chain runs to 600 residues: UvrABC system protein C (600 aa).

Residues 15–100 (NSAGVYQYFN…IKQLHPKYNI (86 aa)) form the GIY-YIG domain. In terms of domain architecture, UVR spans 203–238 (SVLLKNLEKQMLVLAQNENYEEAAKVRDQIAMIKDL).

It belongs to the UvrC family. In terms of assembly, interacts with UvrB in an incision complex.

The protein resides in the cytoplasm. In terms of biological role, the UvrABC repair system catalyzes the recognition and processing of DNA lesions. UvrC both incises the 5' and 3' sides of the lesion. The N-terminal half is responsible for the 3' incision and the C-terminal half is responsible for the 5' incision. In Campylobacter jejuni (strain RM1221), this protein is UvrABC system protein C.